Consider the following 55-residue polypeptide: Ribulose bisphosphate carboxylase large chain (55 aa).

The active-site Proton acceptor is the H18. 2 residues coordinate substrate: R19 and H27.

The protein belongs to the RuBisCO large chain family. Type I subfamily. Heterohexadecamer of 8 large chains and 8 small chains; disulfide-linked. The disulfide link is formed within the large subunit homodimers. Mg(2+) serves as cofactor. The disulfide bond which can form in the large chain dimeric partners within the hexadecamer appears to be associated with oxidative stress and protein turnover.

The protein resides in the plastid. It is found in the chloroplast. It catalyses the reaction 2 (2R)-3-phosphoglycerate + 2 H(+) = D-ribulose 1,5-bisphosphate + CO2 + H2O. The enzyme catalyses D-ribulose 1,5-bisphosphate + O2 = 2-phosphoglycolate + (2R)-3-phosphoglycerate + 2 H(+). Functionally, ruBisCO catalyzes two reactions: the carboxylation of D-ribulose 1,5-bisphosphate, the primary event in carbon dioxide fixation, as well as the oxidative fragmentation of the pentose substrate in the photorespiration process. Both reactions occur simultaneously and in competition at the same active site. This chain is Ribulose bisphosphate carboxylase large chain, found in Vitis sp. (Grape).